Here is a 512-residue protein sequence, read N- to C-terminus: Peroxisomal N(1)-acetyl-spermine/spermidine oxidase (512 aa).

Position 1 is an N-acetylmethionine (Met-1). A propeptide spanning residues Met-1 to Arg-6 is cleaved from the precursor. FAD contacts are provided by residues Ala-25, Glu-46, Arg-54, and His-70–Trp-71. Substrate is bound by residues His-73 and Val-195. Val-248 is an FAD binding site. Asn-321 contacts substrate. FAD contacts are provided by residues Glu-473 and Thr-482 to Thr-483. Residues Pro-510–Leu-512 carry the Microbody targeting signal motif.

This sequence belongs to the flavin monoamine oxidase family. In terms of assembly, monomer. It depends on FAD as a cofactor.

It localises to the peroxisome. Its subcellular location is the cytoplasm. The enzyme catalyses N(1)-acetylspermine + O2 + H2O = 3-acetamidopropanal + spermidine + H2O2. It carries out the reaction N(1)-acetylspermidine + O2 + H2O = 3-acetamidopropanal + putrescine + H2O2. It catalyses the reaction N(1),N(12)-diacetylspermine + O2 + H2O = 3-acetamidopropanal + N(1)-acetylspermidine + H2O2. Its pathway is amine and polyamine metabolism; spermine metabolism. Its function is as follows. Flavoenzyme which catalyzes the oxidation of N(1)-acetylspermine to spermidine and is thus involved in the polyamine back-conversion. Can also oxidize N(1)-acetylspermidine to putrescine. Substrate specificity: N(1)-acetylspermine = N(1)-acetylspermidine &gt; N(1),N(12)-diacylspermine &gt;&gt; spermine. Does not oxidize spermidine. Plays an important role in the regulation of polyamine intracellular concentration. The sequence is that of Peroxisomal N(1)-acetyl-spermine/spermidine oxidase (PAOX) from Bos taurus (Bovine).